A 365-amino-acid polypeptide reads, in one-letter code: tRNA/tmRNA (uracil-C(5))-methyltransferase (365 aa).

Q189, Y217, N222, E238, and D298 together coordinate S-adenosyl-L-methionine. The active-site Nucleophile is C323. E357 functions as the Proton acceptor in the catalytic mechanism.

The protein belongs to the class I-like SAM-binding methyltransferase superfamily. RNA M5U methyltransferase family. TrmA subfamily.

The catalysed reaction is uridine(54) in tRNA + S-adenosyl-L-methionine = 5-methyluridine(54) in tRNA + S-adenosyl-L-homocysteine + H(+). It catalyses the reaction uridine(341) in tmRNA + S-adenosyl-L-methionine = 5-methyluridine(341) in tmRNA + S-adenosyl-L-homocysteine + H(+). Dual-specificity methyltransferase that catalyzes the formation of 5-methyluridine at position 54 (m5U54) in all tRNAs, and that of position 341 (m5U341) in tmRNA (transfer-mRNA). This is tRNA/tmRNA (uracil-C(5))-methyltransferase from Pseudoalteromonas atlantica (strain T6c / ATCC BAA-1087).